Here is a 291-residue protein sequence, read N- to C-terminus: Nucleotide-binding protein Cthe_0113 (291 aa).

Residue 8-15 coordinates ATP; it reads GISGAGKS. 59–62 contacts GTP; the sequence is DIRG.

The protein belongs to the RapZ-like family.

In terms of biological role, displays ATPase and GTPase activities. The protein is Nucleotide-binding protein Cthe_0113 of Acetivibrio thermocellus (strain ATCC 27405 / DSM 1237 / JCM 9322 / NBRC 103400 / NCIMB 10682 / NRRL B-4536 / VPI 7372) (Clostridium thermocellum).